Here is a 1102-residue protein sequence, read N- to C-terminus: Putative helicase/primase complex protein (1102 aa).

2 disordered regions span residues 1031–1057 (TKEEISSTKEETYSTKEETYSTKEETC) and 1082–1102 (EETCSIKEETSSIKEETFTET).

The protein belongs to the asfivirus F1055L family.

In terms of biological role, may be involved in DNA replication. The protein is Putative helicase/primase complex protein of African swine fever virus (isolate Tick/Malawi/Lil 20-1/1983) (ASFV).